The chain runs to 309 residues: Tumor necrosis factor ligand superfamily member 9 (309 aa).

Residues 1–16 (MDQHTLDVEDTADARH) are compositionally biased toward basic and acidic residues. The segment at 1-20 (MDQHTLDVEDTADARHPAGT) is disordered. The Cytoplasmic portion of the chain corresponds to 1-82 (MDQHTLDVED…ALNFCSRHPK (82 aa)). A helical; Signal-anchor for type II membrane protein transmembrane segment spans residues 83–103 (LYGLVALVLLLLIAACVPIFT). Residues 104–309 (RTEPRPALTI…FLVKPDNPWE (206 aa)) lie on the Extracellular side of the membrane. N-linked (GlcNAc...) asparagine glycans are attached at residues N139, N161, and N293. Positions 147–302 (VFAKLLAKNQ…NTTSFGLFLV (156 aa)) constitute a THD domain.

This sequence belongs to the tumor necrosis factor family. In terms of assembly, homotrimer.

Its subcellular location is the membrane. In terms of biological role, cytokine that binds to TNFRSF9. Induces the proliferation of activated peripheral blood T-cells. May have a role in activation-induced cell death (AICD). May play a role in cognate interactions between T-cells and B-cells/macrophages. The chain is Tumor necrosis factor ligand superfamily member 9 (Tnfsf9) from Mus musculus (Mouse).